Reading from the N-terminus, the 433-residue chain is MILASVLKAFQGLQTGLQHSYQDGSPSCPINLPLSCGNETAISDLCCFEYPGGILLMTQFWNYAPSKPNLNRTELEEELGPVDSFTIHGLWPDDCMGGYPQFCKRDLFIDDVDYLLKSDAFNNDDTLPIQGEELLNNLNKYWKSNNGNHESLWIHEYNKHGTCLSTLQPQCYSRWNPTTSQKGPKYYKKKAVYDYFRISYDLFQKLNTYEMLAKHNITPSNDTSYTKSEILSALSSEFQGTQAHINCNSQNALTEVWYYHQLNGSILNEDFIPLDPLRSMSRCKDQGIKYYPKGYQRRDNRGPNKKPISRGTIRISQYGGFLIKTGRWMKRGTPANFELIESKYGNYLLKSRMGYCTVHNDKSQLDCSSRSPDYATQFDYNEEKGILGYSGSFEWGAESAPKNGRTSRSVVFAVSNEKNSNLKYKFQLKFNRK.

Cystine bridges form between Cys28–Cys47, Cys36–Cys95, Cys46–Cys171, and Cys103–Cys163. Asn38 and Asn71 each carry an N-linked (GlcNAc...) asparagine glycan. Active-site residues include His88, Glu156, and His160. Asn221 and Asn263 each carry an N-linked (GlcNAc...) asparagine glycan. Cys247 and Cys283 are oxidised to a cystine.

The protein belongs to the RNase T2 family.

The protein localises to the vacuole lumen. The protein resides in the cytoplasm. It catalyses the reaction a ribonucleotidyl-ribonucleotide-RNA + H2O = a 3'-end 3'-phospho-ribonucleotide-RNA + a 5'-end dephospho-ribonucleoside-RNA + H(+). Functionally, rnase which modulates cell survival under stress conditions. Released from the vacuole to the cytoplasm during stress to promote tRNA and rRNA cleavage and to activate separately a downstream pathway that promotes cell death. Involved in cell size, vacuolar morphology and growth at high temperatures and high salt concentration. This chain is Ribonuclease T2-like (RNY1), found in Candida glabrata (strain ATCC 2001 / BCRC 20586 / JCM 3761 / NBRC 0622 / NRRL Y-65 / CBS 138) (Yeast).